Consider the following 795-residue polypeptide: TBC1 domain family member 5 (795 aa).

Residues 1 to 13 are compositionally biased toward basic and acidic residues; sequence MYHSLSETRHPLQ. The segment at 1–49 is disordered; it reads MYHSLSETRHPLQPEEQEVGIDPLSSYSNKSGGDSNKNGRRTSSTLDSE. Residues 25-49 are compositionally biased toward polar residues; it reads SSYSNKSGGDSNKNGRRTSSTLDSE. Thr42 bears the Phosphothreonine mark. 2 positions are modified to phosphoserine: Ser43 and Ser44. The segment at 56–64 is required for interaction with retromer; involved in interaction with ATG8 family proteins; sequence RKEWEELFV. Positions 57 to 62 match the LIR 1 motif; that stretch reads KEWEEL. A Rab-GAP TBC domain is found at 81-359; that stretch reads LRSSRFRSIC…VVWDALFADG (279 aa). Ser460 carries the post-translational modification Phosphoserine. The segment at 475 to 564 is disordered; sequence PGSAGGPVPG…PPSSATKKDS (90 aa). Residues 484-496 are compositionally biased toward low complexity; the sequence is GGNSSSSSSVVIP. Residues Ser522, Ser539, Ser541, Ser544, Ser554, Ser570, Ser584, and Ser730 each carry the phosphoserine modification. Residues 523–542 show a composition bias toward polar residues; it reads MPVQLNKGLSSKNISSSPSV. The span at 554–564 shows a compositional bias: polar residues; it reads SPPSSATKKDS. Residues 674–795 form a disordered region; it reads HYCSSGQGQG…GFTIVSPLDI (122 aa). Positions 727–748 are enriched in polar residues; sequence ARGSFSGQAQPLRTLRSTSGKS. Over residues 765 to 776 the composition is skewed to low complexity; the sequence is PASASSSNPSSS. Residues 785 to 789 carry the LIR 2 motif; the sequence is SGFTI. A required for interaction with ATG8 family proteins region spans residues 786–791; the sequence is GFTIVS. Ser791 carries the phosphoserine modification.

In terms of assembly, interacts with MAP1LC3A, MAP1LC3B, MAP1LC3C, GABARAP, GABARAPL1, GABARAPL2. Interacts with VPS29 and VPS35; indicative for an association with retromer CSC subcomplex. MAP1LC3A and VPS29 compete for binding to TBC1D5. Interacts with AP2M1; indicative for an association with the AP2 complex. Interacts with ULK1 and ATG13 (phosphorylated); indicative for an association with the activated ULK1-ATG13-FIP200 complex. Interacts with ATG9A; the interactions seems to be restricted to the AP2-clathrin-associated fraction of ATG9A.

The protein localises to the endosome membrane. It is found in the cytoplasmic vesicle. The protein resides in the autophagosome. In terms of biological role, may act as a GTPase-activating protein (GAP) for Rab family protein(s). May act as a GAP for RAB7A. Can displace RAB7A and retromer CSC subcomplex from the endosomal membrane to the cytosol; at least retromer displacement seems to require its catalytic activity. Required for retrograde transport of cargo proteins from endosomes to the trans-Golgi network (TGN); the function seems to require its catalytic activity. Involved in regulation of autophagy. May act as a molecular switch between endosomal and autophagosomal transport and is involved in reprogramming vesicle trafficking upon autophagy induction. Involved in the trafficking of ATG9A upon activation of autophagy. May regulate the recruitment of ATG9A-AP2-containing vesicles to autophagic membranes. This Homo sapiens (Human) protein is TBC1 domain family member 5 (TBC1D5).